The following is a 281-amino-acid chain: MQTALASRGRVGLVPTMGFLHEGHATLIRRARAECDVVVVSIFVNPMQFGPTEDLATYPRDLDRDLALAGAAGADFVFHPEAAAMYPAGFSTRVEVSGVSEPLDGAARPGHFAGVATVVLKLLNIVQPERAYFGEKDWQQLAVVRRLVADLNLRSEIVGVPTVRADEEAAHAGLALSSRNSYLSPEQQRRATVLSRALRAVQAAYAGGERDTGRLRQAGLDVLASEPELALDYLVVVGPDLRDVPQLSDDPLNRVLIAGRLFGVRLIDNMPLSTAPVPAPA.

17–24 (MGFLHEGH) serves as a coordination point for ATP. The active-site Proton donor is His-24. A (R)-pantoate-binding site is contributed by Gln-48. Gln-48 serves as a coordination point for beta-alanine. 134–137 (GEKD) provides a ligand contact to ATP. Gln-140 contacts (R)-pantoate. ATP-binding positions include Val-163 and 176 to 179 (LSSR).

This sequence belongs to the pantothenate synthetase family. Homodimer.

It is found in the cytoplasm. The enzyme catalyses (R)-pantoate + beta-alanine + ATP = (R)-pantothenate + AMP + diphosphate + H(+). The protein operates within cofactor biosynthesis; (R)-pantothenate biosynthesis; (R)-pantothenate from (R)-pantoate and beta-alanine: step 1/1. Functionally, catalyzes the condensation of pantoate with beta-alanine in an ATP-dependent reaction via a pantoyl-adenylate intermediate. The sequence is that of Pantothenate synthetase from Deinococcus radiodurans (strain ATCC 13939 / DSM 20539 / JCM 16871 / CCUG 27074 / LMG 4051 / NBRC 15346 / NCIMB 9279 / VKM B-1422 / R1).